The primary structure comprises 250 residues: 3-deoxy-manno-octulosonate cytidylyltransferase (250 aa).

Belongs to the KdsB family.

Its subcellular location is the cytoplasm. The catalysed reaction is 3-deoxy-alpha-D-manno-oct-2-ulosonate + CTP = CMP-3-deoxy-beta-D-manno-octulosonate + diphosphate. It participates in nucleotide-sugar biosynthesis; CMP-3-deoxy-D-manno-octulosonate biosynthesis; CMP-3-deoxy-D-manno-octulosonate from 3-deoxy-D-manno-octulosonate and CTP: step 1/1. Its pathway is bacterial outer membrane biogenesis; lipopolysaccharide biosynthesis. In terms of biological role, activates KDO (a required 8-carbon sugar) for incorporation into bacterial lipopolysaccharide in Gram-negative bacteria. The chain is 3-deoxy-manno-octulosonate cytidylyltransferase from Legionella pneumophila (strain Corby).